The following is a 1183-amino-acid chain: DNA-directed RNA polymerase subunit beta (1183 aa).

A compositionally biased stretch (acidic residues) spans 1151–1162; that stretch reads EIEMADVDDEDA. The segment at 1151–1183 is disordered; the sequence is EIEMADVDDEDAAERKVDLQQKSAPESQKETTD.

This sequence belongs to the RNA polymerase beta chain family. In terms of assembly, the RNAP catalytic core consists of 2 alpha, 1 beta, 1 beta' and 1 omega subunit. When a sigma factor is associated with the core the holoenzyme is formed, which can initiate transcription.

It catalyses the reaction RNA(n) + a ribonucleoside 5'-triphosphate = RNA(n+1) + diphosphate. Functionally, DNA-dependent RNA polymerase catalyzes the transcription of DNA into RNA using the four ribonucleoside triphosphates as substrates. The polypeptide is DNA-directed RNA polymerase subunit beta (Staphylococcus epidermidis (strain ATCC 12228 / FDA PCI 1200)).